Consider the following 361-residue polypeptide: Peptide chain release factor 1 (361 aa).

At Gln238 the chain carries N5-methylglutamine.

This sequence belongs to the prokaryotic/mitochondrial release factor family. In terms of processing, methylated by PrmC. Methylation increases the termination efficiency of RF1.

It is found in the cytoplasm. In terms of biological role, peptide chain release factor 1 directs the termination of translation in response to the peptide chain termination codons UAG and UAA. The polypeptide is Peptide chain release factor 1 (Mesomycoplasma hyopneumoniae (strain 7448) (Mycoplasma hyopneumoniae)).